We begin with the raw amino-acid sequence, 96 residues long: Co-chaperonin GroES (96 aa).

It belongs to the GroES chaperonin family. As to quaternary structure, heptamer of 7 subunits arranged in a ring. Interacts with the chaperonin GroEL.

It localises to the cytoplasm. Its function is as follows. Together with the chaperonin GroEL, plays an essential role in assisting protein folding. The GroEL-GroES system forms a nano-cage that allows encapsulation of the non-native substrate proteins and provides a physical environment optimized to promote and accelerate protein folding. GroES binds to the apical surface of the GroEL ring, thereby capping the opening of the GroEL channel. This chain is Co-chaperonin GroES, found in Buchnera aphidicola subsp. Acyrthosiphon pisum (strain 5A).